The sequence spans 317 residues: Transaldolase (317 aa).

Residue Lys132 is the Schiff-base intermediate with substrate of the active site.

Belongs to the transaldolase family. Type 1 subfamily. As to quaternary structure, homodimer.

Its subcellular location is the cytoplasm. The enzyme catalyses D-sedoheptulose 7-phosphate + D-glyceraldehyde 3-phosphate = D-erythrose 4-phosphate + beta-D-fructose 6-phosphate. Its pathway is carbohydrate degradation; pentose phosphate pathway; D-glyceraldehyde 3-phosphate and beta-D-fructose 6-phosphate from D-ribose 5-phosphate and D-xylulose 5-phosphate (non-oxidative stage): step 2/3. In terms of biological role, transaldolase is important for the balance of metabolites in the pentose-phosphate pathway. The chain is Transaldolase from Histophilus somni (strain 2336) (Haemophilus somnus).